A 110-amino-acid chain; its full sequence is Insulin-2 (110 aa).

The signal sequence occupies residues 1–24; that stretch reads MALWIRFLPLLALLILWEPRPAQA. Disulfide bonds link Cys31–Cys96, Cys43–Cys109, and Cys95–Cys100. Positions 57–87 are cleaved as a propeptide — c peptide; that stretch reads EVEDPQVAQLELGGGPGAGDLQTLALEVARQ.

This sequence belongs to the insulin family. As to quaternary structure, heterodimer of a B chain and an A chain linked by two disulfide bonds.

The protein localises to the secreted. Its function is as follows. Insulin decreases blood glucose concentration. It increases cell permeability to monosaccharides, amino acids and fatty acids. It accelerates glycolysis, the pentose phosphate cycle, and glycogen synthesis in liver. This is Insulin-2 (Ins2) from Rattus norvegicus (Rat).